A 469-amino-acid polypeptide reads, in one-letter code: 3-isopropylmalate dehydratase large subunit (469 aa).

Positions 350, 410, and 413 each coordinate [4Fe-4S] cluster.

It belongs to the aconitase/IPM isomerase family. LeuC type 1 subfamily. Heterodimer of LeuC and LeuD. It depends on [4Fe-4S] cluster as a cofactor.

It catalyses the reaction (2R,3S)-3-isopropylmalate = (2S)-2-isopropylmalate. The protein operates within amino-acid biosynthesis; L-leucine biosynthesis; L-leucine from 3-methyl-2-oxobutanoate: step 2/4. In terms of biological role, catalyzes the isomerization between 2-isopropylmalate and 3-isopropylmalate, via the formation of 2-isopropylmaleate. This chain is 3-isopropylmalate dehydratase large subunit, found in Sinorhizobium fredii (strain NBRC 101917 / NGR234).